The chain runs to 173 residues: CKLF-like MARVEL transmembrane domain-containing protein 8 (173 aa).

One can recognise an MARVEL domain in the interval 36-168 (FLRTLPGFLI…NTYFSFIAWR (133 aa)). 4 helical membrane passes run 40–60 (LPGF…TLIA), 70–90 (FGWV…FLII), 105–125 (TTVG…AAVV), and 147–167 (FFAF…FIAW).

The protein belongs to the chemokine-like factor family. Highly expressed in liver and pancreas.

The protein localises to the membrane. It is found in the cytoplasm. The protein resides in the nucleus. The protein is CKLF-like MARVEL transmembrane domain-containing protein 8 (CMTM8) of Homo sapiens (Human).